The following is a 143-amino-acid chain: Large ribosomal subunit protein uL13 (143 aa).

The protein belongs to the universal ribosomal protein uL13 family. Part of the 50S ribosomal subunit.

In terms of biological role, this protein is one of the early assembly proteins of the 50S ribosomal subunit, although it is not seen to bind rRNA by itself. It is important during the early stages of 50S assembly. The polypeptide is Large ribosomal subunit protein uL13 (Clostridioides difficile (strain 630) (Peptoclostridium difficile)).